The primary structure comprises 196 residues: Inosine triphosphate pyrophosphatase 1 (196 aa).

Position 20–25 (threonine 20–lysine 25) interacts with ITP. Glutamate 48 contributes to the Mg(2+) binding site. ITP is bound by residues lysine 61, aspartate 77 to threonine 78, lysine 94, phenylalanine 153 to aspartate 156, lysine 177, and proline 182 to arginine 183.

The protein belongs to the HAM1 NTPase family. As to quaternary structure, homodimer. It depends on Mg(2+) as a cofactor. Mn(2+) is required as a cofactor.

The protein resides in the cytoplasm. It carries out the reaction ITP + H2O = IMP + diphosphate + H(+). It catalyses the reaction dITP + H2O = dIMP + diphosphate + H(+). The enzyme catalyses XTP + H2O = XMP + diphosphate + H(+). Functionally, pyrophosphatase that hydrolyzes non-canonical purine nucleotides such as inosine triphosphate (ITP), deoxyinosine triphosphate (dITP) or xanthosine 5'-triphosphate (XTP) to their respective monophosphate derivatives. The enzyme does not distinguish between the deoxy- and ribose forms. Probably excludes non-canonical purines from RNA and DNA precursor pools, thus preventing their incorporation into RNA and DNA and avoiding chromosomal lesions. This Trypanosoma cruzi (strain CL Brener) protein is Inosine triphosphate pyrophosphatase 1.